The primary structure comprises 966 residues: Alanine--tRNA ligase (966 aa).

The Zn(2+) site is built by His-646, His-650, Cys-750, and His-754. Residues 927–949 (DRLGGGGGGRPSLASAGGRDPEA) are disordered.

Belongs to the class-II aminoacyl-tRNA synthetase family. Zn(2+) is required as a cofactor.

It is found in the cytoplasm. The catalysed reaction is tRNA(Ala) + L-alanine + ATP = L-alanyl-tRNA(Ala) + AMP + diphosphate. Catalyzes the attachment of alanine to tRNA(Ala) in a two-step reaction: alanine is first activated by ATP to form Ala-AMP and then transferred to the acceptor end of tRNA(Ala). Also edits incorrectly charged Ser-tRNA(Ala) and Gly-tRNA(Ala) via its editing domain. The chain is Alanine--tRNA ligase from Salinibacter ruber (strain DSM 13855 / M31).